The sequence spans 216 residues: uncharacterized protein (216 aa).

A helical transmembrane segment spans residues Val39–Phe59. Residues Phe59–Ile108 adopt a coiled-coil conformation.

It localises to the membrane. This is an uncharacterized protein from Aquifex aeolicus (strain VF5).